We begin with the raw amino-acid sequence, 486 residues long: Membrane-bound lytic murein transglycosylase F (486 aa).

Residues 1–28 form the signal peptide; that stretch reads MFAHTLFRKRCAIWLLAIGIFLMLGSCA. Positions 29 to 267 are non-LT domain; sequence EKPSELERIK…RLRERYYGHV (239 aa). Positions 268-486 are LT domain; it reads DVLGYVGAYA…TDLMEELPPL (219 aa). Glutamate 314 is a catalytic residue.

This sequence in the N-terminal section; belongs to the bacterial solute-binding protein 3 family. The protein in the C-terminal section; belongs to the transglycosylase Slt family.

It localises to the cell outer membrane. It catalyses the reaction Exolytic cleavage of the (1-&gt;4)-beta-glycosidic linkage between N-acetylmuramic acid (MurNAc) and N-acetylglucosamine (GlcNAc) residues in peptidoglycan, from either the reducing or the non-reducing ends of the peptidoglycan chains, with concomitant formation of a 1,6-anhydrobond in the MurNAc residue.. Functionally, murein-degrading enzyme that degrades murein glycan strands and insoluble, high-molecular weight murein sacculi, with the concomitant formation of a 1,6-anhydromuramoyl product. Lytic transglycosylases (LTs) play an integral role in the metabolism of the peptidoglycan (PG) sacculus. Their lytic action creates space within the PG sacculus to allow for its expansion as well as for the insertion of various structures such as secretion systems and flagella. In Stutzerimonas stutzeri (strain A1501) (Pseudomonas stutzeri), this protein is Membrane-bound lytic murein transglycosylase F.